We begin with the raw amino-acid sequence, 325 residues long: 2-dehydro-3-deoxygluconokinase (325 aa).

Substrate-binding positions include 49 to 53 (GSEAN), Tyr-105, 121 to 123 (YYR), and Arg-181. Residues 179 to 181 (NIR), 240 to 245 (KLGAEG), and 269 to 272 (GAGD) contribute to the ATP site. Residues Asp-272 and Asp-308 each contribute to the substrate site. Asp-272 (proton acceptor) is an active-site residue.

Belongs to the carbohydrate kinase PfkB family. As to quaternary structure, homohexamer; trimer of dimers.

The catalysed reaction is 2-dehydro-3-deoxy-D-gluconate + ATP = 2-dehydro-3-deoxy-6-phospho-D-gluconate + ADP + H(+). Its pathway is carbohydrate acid metabolism; 2-dehydro-3-deoxy-D-gluconate degradation; D-glyceraldehyde 3-phosphate and pyruvate from 2-dehydro-3-deoxy-D-gluconate: step 1/2. In terms of biological role, involved in the degradation of glucose via the semi-phosphorylative Entner-Doudoroff pathway. Catalyzes the phosphorylation of 2-keto-3-deoxygluconate (KDG) yielding 2-keto-3-deoxy-6-phosphogluconate (KDPG). This chain is 2-dehydro-3-deoxygluconokinase (kdgK), found in Thermoproteus tenax.